The sequence spans 605 residues: Pyruvate decarboxylase 1 (605 aa).

The substrate site is built by D67 and H154. The interval 432-514 (DSWFNCQKLR…FLINNGGYTI (83 aa)) is thiamine pyrophosphate binding. Residues D482, N509, and G511 each contribute to the Mg(2+) site. E515 lines the substrate pocket.

Belongs to the TPP enzyme family. As to quaternary structure, homotetramer. It depends on a metal cation as a cofactor. Requires thiamine diphosphate as cofactor.

It carries out the reaction a 2-oxocarboxylate + H(+) = an aldehyde + CO2. The sequence is that of Pyruvate decarboxylase 1 (PDC1) from Oryza sativa subsp. indica (Rice).